Reading from the N-terminus, the 74-residue chain is Defensin (74 aa).

Positions 1–22 (MRGLCICLVFLLVCGLVSATAA) are cleaved as a signal peptide. A propeptide spanning residues 23 to 36 (APAESEVAHLRVRR) is cleaved from the precursor. Cystine bridges form between C40-C61, C47-C69, and C51-C71.

As to expression, hemolymph.

It is found in the secreted. In terms of biological role, antibacterial activity against Gram-positive and Gram-negative bacteria. This Dermacentor variabilis (American dog tick) protein is Defensin (VSNA1).